The primary structure comprises 490 residues: Glutamyl-tRNA(Gln) amidotransferase subunit A (490 aa).

Residues Lys78 and Ser158 each act as charge relay system in the active site. The active-site Acyl-ester intermediate is the Ser182.

This sequence belongs to the amidase family. GatA subfamily. In terms of assembly, heterotrimer of A, B and C subunits.

It carries out the reaction L-glutamyl-tRNA(Gln) + L-glutamine + ATP + H2O = L-glutaminyl-tRNA(Gln) + L-glutamate + ADP + phosphate + H(+). Allows the formation of correctly charged Gln-tRNA(Gln) through the transamidation of misacylated Glu-tRNA(Gln) in organisms which lack glutaminyl-tRNA synthetase. The reaction takes place in the presence of glutamine and ATP through an activated gamma-phospho-Glu-tRNA(Gln). The chain is Glutamyl-tRNA(Gln) amidotransferase subunit A from Caulobacter sp. (strain K31).